Consider the following 664-residue polypeptide: MNSRSCICVSAMKPCCRFLISFRSSSLFGFSPPNSGKFINSSKLHCTKIDSRSIRSGIHCRRIVLDRNAFCDSDSISWGGGGSRVLRARGSSRGRGRGVLVIPHVASDFRNYSTSSLDSHVNDKSFESMFVKPLVFKEVEKTEGIPKRERGNVGGGKDANFGNVGVRKETERCLSQTEVEKEAWKLLRGAVVNYCGFPVGTVAANDPGDTQTLNYDQVFIRDFVPSAYAFMLDGEGEIVRNFLLHTLQLQSWEKTVDCHSPGPGLMPASFKVKSAPLEGNDGSFEEFLDPDFGGSAIGRVSPVDSGLWWIILLRAYGKLTGDYTLQERIDVQTGIKLILKLCLADGFDMFPTLLVTDGSCMVDRRMGIHGHPLEIQALFYSALRCAREMLIVNDGTKSLVTAVNNRLSALSFHIREYYWVDIKKINEIYRYNTEEYSADATNKFNIYPEQIPTWLVDWIPDKGGYFIGNLQPAHMDFRFFTLGNLWAVISSLGNQEQNEGVMTLIEEKWDDLVANMPLKICFPALEKDEWRIITGSDPKNTPWSYHNGGSWPTLLWQFTLACIKMGKLELAKKAVAVAEKRLKEDEWPEYYDTKSGRFVGKQSRLYQTWTIAGFLAAKKLIEQPEKASLLFWEEDYQLLETCVCGLSKSSGRKNKCSRFTPPRS.

Phosphoserine is present on residues serine 41, serine 125, and serine 657.

The protein belongs to the glycosyl hydrolase 100 family. In terms of tissue distribution, expressed in seedlings, roots and flowers.

It localises to the mitochondrion. It carries out the reaction Hydrolysis of terminal non-reducing beta-D-fructofuranoside residues in beta-D-fructofuranosides.. In terms of biological role, mitochondrial invertase that cleaves sucrose into glucose and fructose and is involved in the regulation of aerial tissue development and floral transition. May be modulating hormone balance in relation to the radicle emergence. This chain is Alkaline/neutral invertase C, mitochondrial, found in Arabidopsis thaliana (Mouse-ear cress).